The sequence spans 363 residues: Probable matrix metalloproteinase 095L (363 aa).

Residues 1–25 (MSVDSFTSRLAVVMTAVVLVWWAQA) form the signal peptide. The propeptide at 26–126 (LPVPSPRRGE…PRCGVPDVSK (101 aa)) is activation peptide. The Cysteine switch signature appears at 117–124 (PRCGVPDV). Residues C119 and H275 each coordinate Zn(2+). Residue E276 is part of the active site. Zn(2+) is bound by residues H279 and H285.

This sequence belongs to the peptidase M10A family. The cofactor is Zn(2+).

It is found in the secreted. In terms of biological role, probable endopeptidase. The sequence is that of Probable matrix metalloproteinase 095L from Aedes vexans (Inland floodwater mosquito).